The chain runs to 128 residues: Large ribosomal subunit protein bL17 (128 aa).

This sequence belongs to the bacterial ribosomal protein bL17 family. In terms of assembly, part of the 50S ribosomal subunit. Contacts protein L32.

In Enterobacter sp. (strain 638), this protein is Large ribosomal subunit protein bL17.